We begin with the raw amino-acid sequence, 59 residues long: UPF0434 protein VC_1876 (59 aa).

This sequence belongs to the UPF0434 family.

The chain is UPF0434 protein VC_1876 from Vibrio cholerae serotype O1 (strain ATCC 39315 / El Tor Inaba N16961).